The following is a 546-amino-acid chain: Chaperonin GroEL 1 (546 aa).

ATP contacts are provided by residues 30–33 (TLGP), Lys-51, 87–91 (DGTTT), Gly-415, 479–481 (NAA), and Asp-495.

Belongs to the chaperonin (HSP60) family. In terms of assembly, forms a cylinder of 14 subunits composed of two heptameric rings stacked back-to-back. Interacts with the co-chaperonin GroES.

It localises to the cytoplasm. It carries out the reaction ATP + H2O + a folded polypeptide = ADP + phosphate + an unfolded polypeptide.. Together with its co-chaperonin GroES, plays an essential role in assisting protein folding. The GroEL-GroES system forms a nano-cage that allows encapsulation of the non-native substrate proteins and provides a physical environment optimized to promote and accelerate protein folding. This is Chaperonin GroEL 1 from Vibrio vulnificus (strain CMCP6).